We begin with the raw amino-acid sequence, 229 residues long: Potassium/proton antiporter CemA (229 aa).

Helical transmembrane passes span 6–26 (AFIPFLYFTSIVFFPWWISLC), 107–127 (IFNFSTNLISFVILSSYSFWG), 152–172 (FLILLLTDLCIGFHSPHGWEL), and 190–210 (LSGLVSTFPVILDTIFKYWIF).

It belongs to the CemA family.

Its subcellular location is the plastid. The protein localises to the chloroplast inner membrane. The catalysed reaction is K(+)(in) + H(+)(out) = K(+)(out) + H(+)(in). Contributes to K(+)/H(+) antiport activity by supporting proton efflux to control proton extrusion and homeostasis in chloroplasts in a light-dependent manner to modulate photosynthesis. Prevents excessive induction of non-photochemical quenching (NPQ) under continuous-light conditions. Indirectly promotes efficient inorganic carbon uptake into chloroplasts. This Aethionema cordifolium (Lebanon stonecress) protein is Potassium/proton antiporter CemA.